The sequence spans 581 residues: Probable CDP-diacylglycerol--glycerol-3-phosphate 3-phosphatidyltransferase (581 aa).

Residues 27–65 (RSATTTTTTTTKACGNGSSQSPPSTPLLSSKSSTITSNK) are disordered. Over residues 44 to 65 (SSQSPPSTPLLSSKSSTITSNK) the composition is skewed to low complexity. 160–167 (ASLYLGTS) is an ATP binding site. 2 PLD phosphodiesterase domains span residues 248–274 (TIGV…SKDY) and 487–520 (DKWT…GSRS). Residues H253, K255, and D260 contribute to the active site.

This sequence belongs to the CDP-alcohol phosphatidyltransferase class-II family.

It carries out the reaction a CDP-1,2-diacyl-sn-glycerol + sn-glycerol 3-phosphate = a 1,2-diacyl-sn-glycero-3-phospho-(1'-sn-glycero-3'-phosphate) + CMP + H(+). Its pathway is phospholipid metabolism; phosphatidylglycerol biosynthesis; phosphatidylglycerol from CDP-diacylglycerol: step 1/2. Its function is as follows. Functions in the biosynthesis of the anionic phospholipids phosphatidylglycerol and cardiolipin. This is Probable CDP-diacylglycerol--glycerol-3-phosphate 3-phosphatidyltransferase (pgs1) from Dictyostelium discoideum (Social amoeba).